Consider the following 198-residue polypeptide: Protein hunchback (198 aa).

Disordered regions lie at residues 16–116 and 158–198; these read SHHH…NPMQ and LTPP…KYMA. Residues 17–31 show a composition bias toward basic residues; it reads HHHHHHHAHHSHHQH. Composition is skewed to low complexity over residues 35-46 and 68-83; these read SNSNSNASSPHQ and QQQQ…QQQQ. Positions 95–105 are enriched in polar residues; that stretch reads PSPSNNDQNSP. Residues 179–198 are compositionally biased toward basic and acidic residues; that stretch reads EPEKEHDLMSNSSEDMKYMA.

It belongs to the hunchback C2H2-type zinc-finger protein family.

The protein localises to the nucleus. Gap class segmentation protein that controls development of head structures. This Drosophila cyrtoloma (Fruit fly) protein is Protein hunchback (hb).